A 290-amino-acid polypeptide reads, in one-letter code: Transmembrane protein 33 homolog (290 aa).

2 disordered regions span residues 1-22 (MSSP…EFTG) and 39-72 (IDPN…SPRA). Over residues 45–72 (SSNNTTTQRPSTSSSSRTSSSSTSSPRA) the composition is skewed to low complexity. The next 4 membrane-spanning stretches (helical) occupy residues 83 to 103 (LYGA…FYFI), 109 to 129 (FFYK…FNTF), 150 to 170 (FVFY…YLLP), and 218 to 238 (IVLI…LVFI).

Belongs to the PER33/POM33 family.

It localises to the membrane. This Dictyostelium discoideum (Social amoeba) protein is Transmembrane protein 33 homolog (tmem33).